A 324-amino-acid chain; its full sequence is Transcription factor TCP24 (324 aa).

One can recognise a TCP domain in the interval 50-108 (GKDRHSKVLTSKGLRDRRIRLSVATAIQFYDLQDRLGFDQPSKAVEWLINAASDSITDL). Disordered regions lie at residues 122 to 215 (QNQT…PMNH) and 261 to 297 (QRSS…NHQL). A compositionally biased stretch (low complexity) spans 127–142 (SACSSGTSESSLLSLS). Residues 144–162 (TEIRGKARERARERTAKDR) form the R domain. Residues 144 to 167 (TEIRGKARERARERTAKDRDKDLQ) are compositionally biased toward basic and acidic residues. Polar residues-rich tracts occupy residues 168 to 192 (NAHS…NWTG) and 200 to 212 (VQLQ…SQEP). Low complexity predominate over residues 261 to 281 (QRSSISSSSSSSSPMDSQSIS).

In terms of assembly, forms a heterodimeric complex with ABAP1. Interacts with SPL. Expressed in cotyledons, particularly in the vascular region, in leaves, roots, stems, buds, flowers and siliques.

It localises to the nucleus. In terms of biological role, plays a pivotal role in the control of morphogenesis of shoot organs by negatively regulating the expression of boundary-specific genes such as CUC genes, probably through the induction of miRNA (e.g. miR164). In association with ABAP1, exerts a negative role in cell proliferation in leaves, possibly by inhibiting mitotic DNA replication. Participates in ovule development. The protein is Transcription factor TCP24 (TCP24) of Arabidopsis thaliana (Mouse-ear cress).